Consider the following 413-residue polypeptide: Probable tRNA pseudouridine synthase D (413 aa).

The active-site Nucleophile is D97. A TRUD domain is found at 167–370; it reads AAPNYYGYQR…YGTYRRVRLE (204 aa).

It belongs to the pseudouridine synthase TruD family.

It carries out the reaction uridine(13) in tRNA = pseudouridine(13) in tRNA. Functionally, could be responsible for synthesis of pseudouridine from uracil-13 in transfer RNAs. The protein is Probable tRNA pseudouridine synthase D of Pyrobaculum aerophilum (strain ATCC 51768 / DSM 7523 / JCM 9630 / CIP 104966 / NBRC 100827 / IM2).